The primary structure comprises 416 residues: Glutamyl-tRNA reductase (416 aa).

Substrate-binding positions include T49–R52, S105, E110–Q112, and Q116. The Nucleophile role is filled by C50. G185–I190 is an NADP(+) binding site.

The protein belongs to the glutamyl-tRNA reductase family. In terms of assembly, homodimer.

It carries out the reaction (S)-4-amino-5-oxopentanoate + tRNA(Glu) + NADP(+) = L-glutamyl-tRNA(Glu) + NADPH + H(+). Its pathway is porphyrin-containing compound metabolism; protoporphyrin-IX biosynthesis; 5-aminolevulinate from L-glutamyl-tRNA(Glu): step 1/2. In terms of biological role, catalyzes the NADPH-dependent reduction of glutamyl-tRNA(Glu) to glutamate 1-semialdehyde (GSA). The protein is Glutamyl-tRNA reductase of Shewanella sediminis (strain HAW-EB3).